The following is an 84-amino-acid chain: MKLTCVLVVLLLVLPFGDLITTSNTEDNKRGATPWQNSLKARGVCSTPEGSCVHNGCICQNAPCCHASGCNWANVCPGFLWDKN.

The signal sequence occupies residues 1–19 (MKLTCVLVVLLLVLPFGDL). Positions 20–42 (ITTSNTEDNKRGATPWQNSLKAR) are excised as a propeptide. 6'-bromotryptophan is present on tryptophan 72. Position 77 is a 4-hydroxyproline (proline 77). Tryptophan 81 carries the post-translational modification 6'-bromotryptophan.

Belongs to the conotoxin O1 superfamily. Post-translationally, contains 4 disulfide bonds. Expressed by the venom duct.

Its subcellular location is the secreted. In terms of biological role, mu-conotoxins block voltage-gated sodium channels. This toxin reversibly blocks voltage-gated sodium channel in cephalopods, with no alteration in the voltage dependence of sodium conductance or on the kinetics of inactivation. The polypeptide is Mu-conotoxin-like Cal 12.2d (Californiconus californicus (California cone)).